A 110-amino-acid chain; its full sequence is Nucleoid-associated protein KPN78578_04440 (110 aa).

It belongs to the YbaB/EbfC family. In terms of assembly, homodimer.

The protein resides in the cytoplasm. The protein localises to the nucleoid. Functionally, binds to DNA and alters its conformation. May be involved in regulation of gene expression, nucleoid organization and DNA protection. The chain is Nucleoid-associated protein KPN78578_04440 from Klebsiella pneumoniae subsp. pneumoniae (strain ATCC 700721 / MGH 78578).